A 509-amino-acid polypeptide reads, in one-letter code: Maturase K (509 aa).

It belongs to the intron maturase 2 family. MatK subfamily.

It is found in the plastid. The protein localises to the chloroplast. Its function is as follows. Usually encoded in the trnK tRNA gene intron. Probably assists in splicing its own and other chloroplast group II introns. The chain is Maturase K from Nicotiana bigelovii (Bigelov's tobacco).